The primary structure comprises 29 residues: Cytochrome b6-f complex subunit 8 (29 aa).

The chain crosses the membrane as a helical span at residues 3 to 23; sequence IVNIAWAALMVVSTFSLTLVV.

The protein belongs to the PetN family. In terms of assembly, the 4 large subunits of the cytochrome b6-f complex are cytochrome b6, subunit IV (17 kDa polypeptide, PetD), cytochrome f and the Rieske protein, while the 4 small subunits are PetG, PetL, PetM and PetN. The complex functions as a dimer.

It is found in the plastid. It localises to the chloroplast thylakoid membrane. Functionally, component of the cytochrome b6-f complex, which mediates electron transfer between photosystem II (PSII) and photosystem I (PSI), cyclic electron flow around PSI, and state transitions. The sequence is that of Cytochrome b6-f complex subunit 8 from Huperzia lucidula (Shining clubmoss).